The chain runs to 327 residues: Putative hydroxymethylpyrimidine/phosphomethylpyrimidine kinase C18B5.05c (327 aa).

Q54 provides a ligand contact to 4-amino-5-hydroxymethyl-2-methylpyrimidine.

Belongs to the ThiD family.

Its subcellular location is the cytoplasm. The protein resides in the nucleus. The catalysed reaction is 4-amino-5-hydroxymethyl-2-methylpyrimidine + ATP = 4-amino-2-methyl-5-(phosphooxymethyl)pyrimidine + ADP + H(+). The enzyme catalyses 4-amino-2-methyl-5-(phosphooxymethyl)pyrimidine + ATP = 4-amino-2-methyl-5-(diphosphooxymethyl)pyrimidine + ADP. Its pathway is cofactor biosynthesis; thiamine diphosphate biosynthesis; 4-amino-2-methyl-5-diphosphomethylpyrimidine from 5-amino-1-(5-phospho-D-ribosyl)imidazole: step 2/3. It participates in cofactor biosynthesis; thiamine diphosphate biosynthesis; 4-amino-2-methyl-5-diphosphomethylpyrimidine from 5-amino-1-(5-phospho-D-ribosyl)imidazole: step 3/3. In terms of biological role, catalyzes the phosphorylation of hydroxymethylpyrimidine phosphate (HMP-P) to HMP-PP, and of HMP to HMP-P. The polypeptide is Putative hydroxymethylpyrimidine/phosphomethylpyrimidine kinase C18B5.05c (Schizosaccharomyces pombe (strain 972 / ATCC 24843) (Fission yeast)).